The primary structure comprises 83 residues: MEQAPNDNGPQREPYTEWLLDILEEIKQEAVKHFPRPILQGVGNWVFTIYGDSWEGVQELIKILQRALFTHYRHGCIHSRIGS.

Ser-79 bears the Phosphoserine; by host mark.

Interacts with human UNG.

It is found in the virion. The protein localises to the host nucleus. In terms of biological role, stimulates gene expression driven by the HIV-2 LTR. Prevents infected cells from undergoing mitosis and proliferating, by inducing arrest or delay in the G2 phase of the cell cycle. Cell cycle arrest creates a favorable environment for maximizing viral expression and production. The sequence is that of Protein Vpr from Pan troglodytes (Chimpanzee).